Here is a 431-residue protein sequence, read N- to C-terminus: Serine--tRNA ligase (431 aa).

235-237 (TSE) lines the L-serine pocket. Residue 266-268 (RSE) participates in ATP binding. Glutamate 289 provides a ligand contact to L-serine. Position 353-356 (353-356 (EISS)) interacts with ATP. Serine 388 is a binding site for L-serine.

The protein belongs to the class-II aminoacyl-tRNA synthetase family. Type-1 seryl-tRNA synthetase subfamily. Homodimer. The tRNA molecule binds across the dimer.

It localises to the cytoplasm. It carries out the reaction tRNA(Ser) + L-serine + ATP = L-seryl-tRNA(Ser) + AMP + diphosphate + H(+). The enzyme catalyses tRNA(Sec) + L-serine + ATP = L-seryl-tRNA(Sec) + AMP + diphosphate + H(+). It participates in aminoacyl-tRNA biosynthesis; selenocysteinyl-tRNA(Sec) biosynthesis; L-seryl-tRNA(Sec) from L-serine and tRNA(Sec): step 1/1. Functionally, catalyzes the attachment of serine to tRNA(Ser). Is also able to aminoacylate tRNA(Sec) with serine, to form the misacylated tRNA L-seryl-tRNA(Sec), which will be further converted into selenocysteinyl-tRNA(Sec). This chain is Serine--tRNA ligase, found in Paraburkholderia phytofirmans (strain DSM 17436 / LMG 22146 / PsJN) (Burkholderia phytofirmans).